The following is a 134-amino-acid chain: Holo-[acyl-carrier-protein] synthase (134 aa).

The Mg(2+) site is built by D8 and E56.

It belongs to the P-Pant transferase superfamily. AcpS family. Mg(2+) is required as a cofactor.

The protein resides in the cytoplasm. The enzyme catalyses apo-[ACP] + CoA = holo-[ACP] + adenosine 3',5'-bisphosphate + H(+). Transfers the 4'-phosphopantetheine moiety from coenzyme A to a Ser of acyl-carrier-protein. The sequence is that of Holo-[acyl-carrier-protein] synthase from Clostridium kluyveri (strain ATCC 8527 / DSM 555 / NBRC 12016 / NCIMB 10680 / K1).